The primary structure comprises 100 residues: Urease subunit gamma (100 aa).

Belongs to the urease gamma subunit family. In terms of assembly, probable heterotrimer of UreA (gamma), UreB (beta) and UreC (alpha) subunits. Three heterotrimers associate to form the active enzyme. The trimeric urease interacts with an accessory complex composed of UreD, UreF and UreG, which is required for the assembly of the nickel containing metallocenter of UreC. The UreE protein may also play a direct role in nickel transfer to the urease apoprotein.

Its subcellular location is the cytoplasm. The catalysed reaction is urea + 2 H2O + H(+) = hydrogencarbonate + 2 NH4(+). It functions in the pathway nitrogen metabolism; urea degradation; CO(2) and NH(3) from urea (urease route): step 1/1. This Proteus mirabilis (strain HI4320) protein is Urease subunit gamma.